The following is a 238-amino-acid chain: Probable transcriptional regulatory protein CF0838 (238 aa).

It belongs to the TACO1 family.

Its subcellular location is the cytoplasm. The chain is Probable transcriptional regulatory protein CF0838 from Chlamydia felis (strain Fe/C-56) (Chlamydophila felis).